The chain runs to 415 residues: Translation initiation factor 2 subunit gamma (415 aa).

The 200-residue stretch at 7-206 (QPEVNIGVVG…GIEEYIKTPY (200 aa)) folds into the tr-type G domain. Positions 16 to 23 (GHVDHGKT) are G1. 4 residues coordinate Mg(2+): aspartate 19, threonine 23, glycine 44, and threonine 46. 19-24 (DHGKTT) serves as a coordination point for GTP. The tract at residues 44–48 (GMTIK) is G2. Positions 59, 62, 74, and 77 each coordinate Zn(2+). The tract at residues 93–96 (DAPG) is G3. GTP-binding positions include 149 to 152 (NKVD) and 184 to 186 (SAL). Residues 149–152 (NKVD) form a G4 region. The interval 184 to 186 (SAL) is G5.

The protein belongs to the TRAFAC class translation factor GTPase superfamily. Classic translation factor GTPase family. EIF2G subfamily. Heterotrimer composed of an alpha, a beta and a gamma chain. It depends on Mg(2+) as a cofactor.

It carries out the reaction GTP + H2O = GDP + phosphate + H(+). EIF-2 functions in the early steps of protein synthesis by forming a ternary complex with GTP and initiator tRNA. This chain is Translation initiation factor 2 subunit gamma, found in Saccharolobus solfataricus (strain ATCC 35092 / DSM 1617 / JCM 11322 / P2) (Sulfolobus solfataricus).